The following is a 48-amino-acid chain: Delta-stichotoxin-Hcr1e (48 aa).

Disulfide bonds link Cys-3–Cys-43, Cys-5–Cys-33, and Cys-26–Cys-44.

Belongs to the sea anemone sodium channel inhibitory toxin family. Type II subfamily.

It is found in the secreted. The protein resides in the nematocyst. Binds to site 3 of voltage-gated sodium channels and inhibits the inactivation process. The chain is Delta-stichotoxin-Hcr1e from Radianthus crispa (Leathery sea anemone).